The following is a 959-amino-acid chain: Probable transport protein MmpL4 (959 aa).

Helical transmembrane passes span 25-45 (FAVPIILVWLAIAVTVSVFIP), 205-225 (VIVILVTLLLVYRSFITVILL), 239-259 (VVALLGHTGLIGLSTFAVNLL), 300-320 (FHVILGSGLTISGATFCLSFA), 333-353 (AVGMLIAVAVALTLGPAVLTV), 381-401 (WPLPILITTCAIAMVGLLALP), 766-786 (WDLVIAGISSLCLIFIIMLII), 790-810 (FVAAAVIVGTVALSLGASFGL), 818-838 (ILGIELHYLVLAMSVIVLLAV), 872-892 (VVTNAGLVFAFTMASMVVSDL), and 902-922 (IGLGLLFDTLIVRSFMMPSIA).

Belongs to the resistance-nodulation-cell division (RND) (TC 2.A.6) family. MmpL subfamily.

Its subcellular location is the cell membrane. The sequence is that of Probable transport protein MmpL4 (mmpL4) from Mycobacterium leprae (strain TN).